Here is a 152-residue protein sequence, read N- to C-terminus: Nucleoside diphosphate kinase A 2 (152 aa).

ATP is bound by residues Lys-12, Phe-60, Arg-88, Thr-94, Arg-105, and Asn-115. His-118 (pros-phosphohistidine intermediate) is an active-site residue.

The protein belongs to the NDK family. Homohexamer. Mg(2+) serves as cofactor. Post-translationally, the N-terminus is blocked.

It localises to the cytoplasm. It is found in the cell membrane. The protein localises to the nucleus. The catalysed reaction is a 2'-deoxyribonucleoside 5'-diphosphate + ATP = a 2'-deoxyribonucleoside 5'-triphosphate + ADP. It catalyses the reaction a ribonucleoside 5'-diphosphate + ATP = a ribonucleoside 5'-triphosphate + ADP. With respect to regulation, autophosphorylation at His-118 increases serine/threonine protein kinase activity of the enzyme. Interaction with the SET complex inhibits exonuclease activity. Major role in the synthesis of nucleoside triphosphates other than ATP. Possesses nucleoside-diphosphate kinase, serine/threonine-specific protein kinase, geranyl and farnesyl pyrophosphate kinase, histidine protein kinase and 3'-5' exonuclease activities. Involved in cell proliferation, differentiation and development, signal transduction, G protein-coupled receptor endocytosis, and gene expression. Required for neural development including neural patterning and cell fate determination. This chain is Nucleoside diphosphate kinase A 2 (NME1-2), found in Bos taurus (Bovine).